Here is a 127-residue protein sequence, read N- to C-terminus: Large ribosomal subunit protein bL20 (127 aa).

The protein belongs to the bacterial ribosomal protein bL20 family.

Functionally, binds directly to 23S ribosomal RNA and is necessary for the in vitro assembly process of the 50S ribosomal subunit. It is not involved in the protein synthesizing functions of that subunit. In Corynebacterium aurimucosum (strain ATCC 700975 / DSM 44827 / CIP 107346 / CN-1) (Corynebacterium nigricans), this protein is Large ribosomal subunit protein bL20.